The sequence spans 285 residues: Bifunctional protein FolD (285 aa).

NADP(+) is bound by residues 165-167 (GRS) and serine 190.

This sequence belongs to the tetrahydrofolate dehydrogenase/cyclohydrolase family. In terms of assembly, homodimer.

It catalyses the reaction (6R)-5,10-methylene-5,6,7,8-tetrahydrofolate + NADP(+) = (6R)-5,10-methenyltetrahydrofolate + NADPH. The enzyme catalyses (6R)-5,10-methenyltetrahydrofolate + H2O = (6R)-10-formyltetrahydrofolate + H(+). It participates in one-carbon metabolism; tetrahydrofolate interconversion. Functionally, catalyzes the oxidation of 5,10-methylenetetrahydrofolate to 5,10-methenyltetrahydrofolate and then the hydrolysis of 5,10-methenyltetrahydrofolate to 10-formyltetrahydrofolate. In Burkholderia ambifaria (strain ATCC BAA-244 / DSM 16087 / CCUG 44356 / LMG 19182 / AMMD) (Burkholderia cepacia (strain AMMD)), this protein is Bifunctional protein FolD.